A 249-amino-acid chain; its full sequence is DNA polymerase sliding clamp (249 aa).

Belongs to the PCNA family. Homotrimer. The subunits circularize to form a toroid; DNA passes through its center. Replication factor C (RFC) is required to load the toroid on the DNA.

Its function is as follows. Sliding clamp subunit that acts as a moving platform for DNA processing. Responsible for tethering the catalytic subunit of DNA polymerase and other proteins to DNA during high-speed replication. The chain is DNA polymerase sliding clamp from Pyrococcus horikoshii (strain ATCC 700860 / DSM 12428 / JCM 9974 / NBRC 100139 / OT-3).